Consider the following 139-residue polypeptide: MPTISQLAKGCRVKKTWKSKVPALNMLYNSLHKKELKLSAPFKRGVCTRVATMTPKKPNSALRKFARVKLSNGIEVNAYIPGEGHNLQEHSIVLIRGGKVKDLPGIRYHIVRGTQDTTGVAKRSQGRSKYGAKRPKKSK.

Asp-102 carries the post-translational modification 3-methylthioaspartic acid. The tract at residues 116–139 is disordered; that stretch reads DTTGVAKRSQGRSKYGAKRPKKSK. The span at 124–139 shows a compositional bias: basic residues; that stretch reads SQGRSKYGAKRPKKSK.

This sequence belongs to the universal ribosomal protein uS12 family. Part of the 30S ribosomal subunit. Contacts proteins S8 and S17. May interact with IF1 in the 30S initiation complex.

In terms of biological role, with S4 and S5 plays an important role in translational accuracy. Interacts with and stabilizes bases of the 16S rRNA that are involved in tRNA selection in the A site and with the mRNA backbone. Located at the interface of the 30S and 50S subunits, it traverses the body of the 30S subunit contacting proteins on the other side and probably holding the rRNA structure together. The combined cluster of proteins S8, S12 and S17 appears to hold together the shoulder and platform of the 30S subunit. This Mesomycoplasma hyopneumoniae (strain 7448) (Mycoplasma hyopneumoniae) protein is Small ribosomal subunit protein uS12.